We begin with the raw amino-acid sequence, 121 residues long: Small ribosomal subunit protein uS13 (121 aa).

The tract at residues 91-121 is disordered; the sequence is HRRGLPVRGQNSKNNARTRKGPRRTVANKKK. The span at 106–121 shows a compositional bias: basic residues; the sequence is ARTRKGPRRTVANKKK.

It belongs to the universal ribosomal protein uS13 family. As to quaternary structure, part of the 30S ribosomal subunit. Forms a loose heterodimer with protein S19. Forms two bridges to the 50S subunit in the 70S ribosome.

Functionally, located at the top of the head of the 30S subunit, it contacts several helices of the 16S rRNA. In the 70S ribosome it contacts the 23S rRNA (bridge B1a) and protein L5 of the 50S subunit (bridge B1b), connecting the 2 subunits; these bridges are implicated in subunit movement. Contacts the tRNAs in the A and P-sites. The polypeptide is Small ribosomal subunit protein uS13 (Bacillus cereus (strain G9842)).